A 240-amino-acid polypeptide reads, in one-letter code: 1-(5-phosphoribosyl)-5-[(5-phosphoribosylamino)methylideneamino] imidazole-4-carboxamide isomerase (240 aa).

The Proton acceptor role is filled by Asp8. Catalysis depends on Asp129, which acts as the Proton donor.

Belongs to the HisA/HisF family.

It localises to the cytoplasm. It carries out the reaction 1-(5-phospho-beta-D-ribosyl)-5-[(5-phospho-beta-D-ribosylamino)methylideneamino]imidazole-4-carboxamide = 5-[(5-phospho-1-deoxy-D-ribulos-1-ylimino)methylamino]-1-(5-phospho-beta-D-ribosyl)imidazole-4-carboxamide. The protein operates within amino-acid biosynthesis; L-histidine biosynthesis; L-histidine from 5-phospho-alpha-D-ribose 1-diphosphate: step 4/9. The protein is 1-(5-phosphoribosyl)-5-[(5-phosphoribosylamino)methylideneamino] imidazole-4-carboxamide isomerase of Herpetosiphon aurantiacus (strain ATCC 23779 / DSM 785 / 114-95).